The sequence spans 1183 residues: DNA-directed RNA polymerase subunit beta (1183 aa).

A compositionally biased stretch (acidic residues) spans 1153–1162; that stretch reads DMQDNEEEDV. Positions 1153–1183 are disordered; the sequence is DMQDNEEEDVVERKVDLQQKDAPQSQKEVTD. The segment covering 1173-1183 has biased composition (polar residues); it reads DAPQSQKEVTD.

Belongs to the RNA polymerase beta chain family. In terms of assembly, the RNAP catalytic core consists of 2 alpha, 1 beta, 1 beta' and 1 omega subunit. When a sigma factor is associated with the core the holoenzyme is formed, which can initiate transcription.

The enzyme catalyses RNA(n) + a ribonucleoside 5'-triphosphate = RNA(n+1) + diphosphate. In terms of biological role, DNA-dependent RNA polymerase catalyzes the transcription of DNA into RNA using the four ribonucleoside triphosphates as substrates. The protein is DNA-directed RNA polymerase subunit beta of Staphylococcus saprophyticus subsp. saprophyticus (strain ATCC 15305 / DSM 20229 / NCIMB 8711 / NCTC 7292 / S-41).